A 657-amino-acid polypeptide reads, in one-letter code: Polycomb protein suz12-A (657 aa).

A disordered region spans residues T335 to P363. The segment covering S347–S358 has biased composition (low complexity). The segment at L413 to H436 adopts a C2H2-type zinc-finger fold. Residues R528–F604 form a VEFS-box region.

The protein belongs to the VEFS (VRN2-EMF2-FIS2-SU(Z)12) family. As to quaternary structure, component of the prc2/eed-ezh2 complex.

It is found in the nucleus. Functionally, polycomb group (PcG) protein. Component of the prc2/eed-ezh2 complex, which methylates 'Lys-9' and 'Lys-27' of histone H3, leading to transcriptional repression of the affected target gene. The polypeptide is Polycomb protein suz12-A (suz12a) (Danio rerio (Zebrafish)).